A 271-amino-acid polypeptide reads, in one-letter code: Putative hydro-lyase blr2921 (271 aa).

This sequence belongs to the D-glutamate cyclase family.

The polypeptide is Putative hydro-lyase blr2921 (Bradyrhizobium diazoefficiens (strain JCM 10833 / BCRC 13528 / IAM 13628 / NBRC 14792 / USDA 110)).